A 581-amino-acid polypeptide reads, in one-letter code: NADP-dependent malic enzyme 1 (581 aa).

The active-site Proton donor is Tyr129. NADP(+) is bound at residue Arg182. Lys200 (proton acceptor) is an active-site residue. 3 residues coordinate a divalent metal cation: Glu272, Asp273, and Asp296. NADP(+) is bound by residues Asp296, 325–341, and Asn437; that span reads LFLG…ELIA.

Belongs to the malic enzymes family. Homohexamers and homooctamers. Mg(2+) is required as a cofactor. Requires Mn(2+) as cofactor. Specifically expressed in roots (only in steles of secondary roots).

It is found in the cytoplasm. The enzyme catalyses (S)-malate + NADP(+) = pyruvate + CO2 + NADPH. It catalyses the reaction oxaloacetate + H(+) = pyruvate + CO2. This is NADP-dependent malic enzyme 1 (NADP-ME1) from Arabidopsis thaliana (Mouse-ear cress).